We begin with the raw amino-acid sequence, 107 residues long: Late embryogenesis abundant protein M10 (107 aa).

Residues 1 to 19 (MGNLMSLVLVALLFSLSLA) form the signal peptide.

Its function is as follows. May be involved in the acquisition of desiccation tolerance during late phase of embryogenesis. The chain is Late embryogenesis abundant protein M10 from Arabidopsis thaliana (Mouse-ear cress).